A 558-amino-acid chain; its full sequence is Serine palmitoyltransferase 2 (558 aa).

Residues 33–42 (HDDDEEEEEV) show a composition bias toward acidic residues. A disordered region spans residues 33–57 (HDDDEEEEEVKVDQGSEETTSSHDI). Position 384 is an N6-(pyridoxal phosphate)lysine (K384).

Belongs to the class-II pyridoxal-phosphate-dependent aminotransferase family. As to quaternary structure, heterodimer of sptl-1/sptl-2. The cofactor is pyridoxal 5'-phosphate.

It carries out the reaction L-serine + hexadecanoyl-CoA + H(+) = 3-oxosphinganine + CO2 + CoA. It functions in the pathway lipid metabolism; sphingolipid metabolism. Its function is as follows. Component of the serine palmitoyltransferase (SPT) that catalyzes the first committed step in sphingolipid biosynthesis, which is the condensation of an acyl-CoA species and L-serine. The catalytic core is composed of a heterodimer of sptl-1 and sptl-2 or sptl-1 and sptl-3. Required for the specification of abicobasal polarity and development of the gut lumen. This Caenorhabditis elegans protein is Serine palmitoyltransferase 2 (sptl-2).